A 305-amino-acid polypeptide reads, in one-letter code: HPr kinase/phosphorylase (305 aa).

Active-site residues include His-138 and Lys-159. Residue 153-160 coordinates ATP; the sequence is GESGIGKS. Residue Ser-160 participates in Mg(2+) binding. The Proton acceptor; for phosphorylation activity. Proton donor; for dephosphorylation activity role is filled by Asp-177. Residues 201–210 form an important for the catalytic mechanism of both phosphorylation and dephosphorylation region; sequence IEIRGIGILD. Glu-202 serves as a coordination point for Mg(2+). Residue Arg-243 is part of the active site. The tract at residues 264–269 is important for the catalytic mechanism of dephosphorylation; the sequence is PVRPGR.

This sequence belongs to the HPrK/P family. In terms of assembly, homohexamer. Mg(2+) is required as a cofactor.

It carries out the reaction [HPr protein]-L-serine + ATP = [HPr protein]-O-phospho-L-serine + ADP + H(+). The catalysed reaction is [HPr protein]-O-phospho-L-serine + phosphate + H(+) = [HPr protein]-L-serine + diphosphate. In terms of biological role, catalyzes the ATP- as well as the pyrophosphate-dependent phosphorylation of a specific serine residue in HPr, a phosphocarrier protein of the phosphoenolpyruvate-dependent sugar phosphotransferase system (PTS). HprK/P also catalyzes the pyrophosphate-producing, inorganic phosphate-dependent dephosphorylation (phosphorolysis) of seryl-phosphorylated HPr (P-Ser-HPr). The two antagonistic activities of HprK/P are regulated by several intracellular metabolites, which change their concentration in response to the absence or presence of rapidly metabolisable carbon sources (glucose, fructose, etc.) in the growth medium. Therefore, by controlling the phosphorylation state of HPr, HPrK/P is a sensor enzyme that plays a major role in the regulation of carbon metabolism and sugar transport: it mediates carbon catabolite repression (CCR), and regulates PTS-catalyzed carbohydrate uptake and inducer exclusion. The polypeptide is HPr kinase/phosphorylase (Thermoanaerobacter pseudethanolicus (strain ATCC 33223 / 39E) (Clostridium thermohydrosulfuricum)).